We begin with the raw amino-acid sequence, 359 residues long: 3-dehydroquinate synthase (359 aa).

Residues 70–75, 105–109, 129–130, K142, K151, and 169–172 contribute to the NAD(+) site; these read DGEQYK, GVIGD, TT, and FYKT. 3 residues coordinate Zn(2+): E184, H247, and H264.

Belongs to the sugar phosphate cyclases superfamily. Dehydroquinate synthase family. The cofactor is Co(2+). Zn(2+) serves as cofactor. Requires NAD(+) as cofactor.

It is found in the cytoplasm. It carries out the reaction 7-phospho-2-dehydro-3-deoxy-D-arabino-heptonate = 3-dehydroquinate + phosphate. It functions in the pathway metabolic intermediate biosynthesis; chorismate biosynthesis; chorismate from D-erythrose 4-phosphate and phosphoenolpyruvate: step 2/7. Functionally, catalyzes the conversion of 3-deoxy-D-arabino-heptulosonate 7-phosphate (DAHP) to dehydroquinate (DHQ). The protein is 3-dehydroquinate synthase of Francisella tularensis subsp. tularensis (strain FSC 198).